Consider the following 366-residue polypeptide: tRNA/tmRNA (uracil-C(5))-methyltransferase (366 aa).

Positions 190, 218, 223, 239, and 299 each coordinate S-adenosyl-L-methionine. The active-site Nucleophile is Cys324. The active-site Proton acceptor is the Glu358.

The protein belongs to the class I-like SAM-binding methyltransferase superfamily. RNA M5U methyltransferase family. TrmA subfamily.

It catalyses the reaction uridine(54) in tRNA + S-adenosyl-L-methionine = 5-methyluridine(54) in tRNA + S-adenosyl-L-homocysteine + H(+). It carries out the reaction uridine(341) in tmRNA + S-adenosyl-L-methionine = 5-methyluridine(341) in tmRNA + S-adenosyl-L-homocysteine + H(+). Dual-specificity methyltransferase that catalyzes the formation of 5-methyluridine at position 54 (m5U54) in all tRNAs, and that of position 341 (m5U341) in tmRNA (transfer-mRNA). This is tRNA/tmRNA (uracil-C(5))-methyltransferase from Salmonella paratyphi C (strain RKS4594).